The sequence spans 355 residues: MSQQRGVNGLRFNQDQSCFCCAMETGVRIFNIEPLMEKGHLDQEQVGSVGQVEMLHRCNLLALVGGGSNPKFSDISVLIWDDSRDGKDKLVLEFTFTKPVLSVRLRSDKIVIALKNRIYVYSFPDNPTKLFEFDTRDNPKGLCDLCPSLEKQLLIFPGHKCGSLQLVDLCNAKPGSSSAPFTINAHQSELGCLAINQQGTLVASASRKGTLIRLFDTQTREQLVELRRGTDPATLYCINFSHDSSFLCSSSDKGTVHIFALKDTKLNRRSALARVGKVGPMIGQYVDSQWSLASFTVPAESACICAFGKNTSKNVNSVIAVCVDGTFHKYVFTPEGNCNREAFDVYLDICDDDIF.

WD repeat units follow at residues 2-40 (SQQR…EKGH) and 185-225 (AHQS…QLVE). The short motif at 226–229 (LRRG) is the L/FRRG motif element. The stretch at 230–269 (TDPATLYCINFSHDSSFLCSSSDKGTVHIFALKDTKLNRR) is one WD 3 repeat.

It belongs to the WD repeat PROPPIN family.

The protein resides in the preautophagosomal structure. Component of the autophagy machinery that controls the major intracellular degradation process by which cytoplasmic materials are packaged into autophagosomes and delivered to lysosomes for degradation. Binds phosphatidylinositol 3-phosphate (PtdIns3P). The polypeptide is WD repeat domain phosphoinositide-interacting protein 4 (wdr45) (Xenopus laevis (African clawed frog)).